Here is a 263-residue protein sequence, read N- to C-terminus: Aminoglycoside (3'') (9) adenylyltransferase (263 aa).

It carries out the reaction streptomycin + ATP = 3''-O-adenylylstreptomycin + diphosphate. It catalyses the reaction spectinomycin + ATP = 9-O-adenylylspectinomycin + diphosphate. Functionally, mediates bacterial resistance to the antibiotics streptomycin and spectinomycin. The polypeptide is Aminoglycoside (3'') (9) adenylyltransferase (Escherichia coli).